The sequence spans 1279 residues: ATP-dependent helicase/nuclease subunit A (1279 aa).

Residues 4-499 form the UvrD-like helicase ATP-binding domain; the sequence is TKWTDEQRQA…VKLFKNFRSR (496 aa). 25-32 provides a ligand contact to ATP; the sequence is AGAGAGKT. Positions 526 to 853 constitute a UvrD-like helicase C-terminal domain; that stretch reads EEALKVGASY…RIMSIHKSKG (328 aa).

Belongs to the helicase family. AddA subfamily. Heterodimer of AddA and AddB/RexB. The cofactor is Mg(2+).

The catalysed reaction is Couples ATP hydrolysis with the unwinding of duplex DNA by translocating in the 3'-5' direction.. The enzyme catalyses ATP + H2O = ADP + phosphate + H(+). In terms of biological role, the heterodimer acts as both an ATP-dependent DNA helicase and an ATP-dependent, dual-direction single-stranded exonuclease. Recognizes the chi site generating a DNA molecule suitable for the initiation of homologous recombination. The AddA nuclease domain is required for chi fragment generation; this subunit has the helicase and 3' -&gt; 5' nuclease activities. This is ATP-dependent helicase/nuclease subunit A from Clostridium botulinum (strain Langeland / NCTC 10281 / Type F).